A 469-amino-acid polypeptide reads, in one-letter code: Zinc transporter SLC39A7 (469 aa).

A helical transmembrane segment spans residues 5–25 (LGAPHWVAVGLLTWAALGLLV). 2 stretches are compositionally biased toward basic and acidic residues: residues 43–56 (HGHS…DFHH) and 66–114 (HTHE…EHSH). Residues 43–122 (HGHSHRRSHE…SHGGYGESGA (80 aa)) form a disordered region. At His-66 the chain carries Pros-methylhistidine. The next 3 helical transmembrane spans lie at 138–158 (ALGA…LIPV), 169–189 (LQIL…LHLI), and 214–234 (GPIL…LVVE). The span at 242-255 (GGHGHSHGHGHTHG) shows a compositional bias: basic residues. The interval 242–313 (GGHGHSHGHG…QNSEEEKTGS (72 aa)) is disordered. The segment covering 256–266 (HTQGSHGHGTQ) has biased composition (low complexity). A phosphoserine mark is found at Ser-275 and Ser-276. The span at 295-313 (RLKDGPLRPQNSEEEKTGS) shows a compositional bias: basic and acidic residues. The next 3 membrane-spanning stretches (helical) occupy residues 386–406 (LTAI…GGAV), 417–437 (GWVL…SVLP), and 448–468 (SLLE…IAHL).

The protein belongs to the ZIP transporter (TC 2.A.5) family. KE4/Catsup subfamily. Homodimer. Methylation at some His residue by METTL9 leads to reduced zinc-binding. In terms of processing, rapidly phosphorylated by CK2 following Zn(2+) treatment. This phosphorylation is required for efficient cytosolic Zn(2+) release.

The protein resides in the endoplasmic reticulum membrane. The protein localises to the golgi apparatus. It is found in the cis-Golgi network membrane. It carries out the reaction Zn(2+)(in) = Zn(2+)(out). Functionally, transports Zn(2+) from the endoplasmic reticulum (ER)/Golgi apparatus to the cytosol, playing an essential role in the regulation of cytosolic zinc levels. Acts as a gatekeeper of zinc release from intracellular stores, requiring post-translational activation by phosphorylation, resulting in activation of multiple downstream pathways leading to cell growth and proliferation. Has an essential role in B cell development and is required for proper B cell receptor signaling. Plays an important role in maintaining intestinal epithelial homeostasis and skin dermis development by regulating ER function. Controls cell signaling pathways involved in glucose metabolism in skeletal muscle. Has a protective role against ER stress in different biological contexts. Mediates Zn(2+)-induced ferroptosis. In Canis lupus familiaris (Dog), this protein is Zinc transporter SLC39A7.